Here is a 451-residue protein sequence, read N- to C-terminus: Uronate isomerase (451 aa).

Belongs to the metallo-dependent hydrolases superfamily. Uronate isomerase family. As to quaternary structure, homotrimer.

It carries out the reaction D-glucuronate = D-fructuronate. The enzyme catalyses aldehydo-D-galacturonate = keto-D-tagaturonate. The protein operates within carbohydrate metabolism; pentose and glucuronate interconversion. The polypeptide is Uronate isomerase (Thermotoga maritima (strain ATCC 43589 / DSM 3109 / JCM 10099 / NBRC 100826 / MSB8)).